The chain runs to 351 residues: Ribosomal RNA large subunit methyltransferase M (351 aa).

S-adenosyl-L-methionine contacts are provided by residues Ser186, 219-222, Asp238, Asp258, and Asp274; that span reads APGG. Lys303 (proton acceptor) is an active-site residue.

This sequence belongs to the class I-like SAM-binding methyltransferase superfamily. RNA methyltransferase RlmE family. RlmM subfamily. In terms of assembly, monomer.

Its subcellular location is the cytoplasm. The enzyme catalyses cytidine(2498) in 23S rRNA + S-adenosyl-L-methionine = 2'-O-methylcytidine(2498) in 23S rRNA + S-adenosyl-L-homocysteine + H(+). Catalyzes the 2'-O-methylation at nucleotide C2498 in 23S rRNA. This is Ribosomal RNA large subunit methyltransferase M from Xylella fastidiosa (strain M23).